A 184-amino-acid polypeptide reads, in one-letter code: ATP synthase subunit b, chloroplastic (184 aa).

The chain crosses the membrane as a helical span at residues 27–49; that stretch reads LATNPINLSVVFGVLIFFGKGVL.

The protein belongs to the ATPase B chain family. As to quaternary structure, F-type ATPases have 2 components, F(1) - the catalytic core - and F(0) - the membrane proton channel. F(1) has five subunits: alpha(3), beta(3), gamma(1), delta(1), epsilon(1). F(0) has four main subunits: a(1), b(1), b'(1) and c(10-14). The alpha and beta chains form an alternating ring which encloses part of the gamma chain. F(1) is attached to F(0) by a central stalk formed by the gamma and epsilon chains, while a peripheral stalk is formed by the delta, b and b' chains.

It is found in the plastid. The protein localises to the chloroplast thylakoid membrane. Functionally, f(1)F(0) ATP synthase produces ATP from ADP in the presence of a proton or sodium gradient. F-type ATPases consist of two structural domains, F(1) containing the extramembraneous catalytic core and F(0) containing the membrane proton channel, linked together by a central stalk and a peripheral stalk. During catalysis, ATP synthesis in the catalytic domain of F(1) is coupled via a rotary mechanism of the central stalk subunits to proton translocation. Its function is as follows. Component of the F(0) channel, it forms part of the peripheral stalk, linking F(1) to F(0). This is ATP synthase subunit b, chloroplastic from Crucihimalaya wallichii (Rock-cress).